The following is a 142-amino-acid chain: Small ribosomal subunit protein uS12 (142 aa).

It belongs to the universal ribosomal protein uS12 family. Part of the 30S ribosomal subunit.

Its function is as follows. With S4 and S5 plays an important role in translational accuracy. Located at the interface of the 30S and 50S subunits. The sequence is that of Small ribosomal subunit protein uS12 from Methanothrix thermoacetophila (strain DSM 6194 / JCM 14653 / NBRC 101360 / PT) (Methanosaeta thermophila).